A 191-amino-acid chain; its full sequence is Ferric nitrobindin-like protein (191 aa).

Positions 20-26 (GDWAGAG) match the GXWXGXG motif.

The protein belongs to the nitrobindin family.

This chain is Ferric nitrobindin-like protein, found in Streptomyces coelicolor (strain ATCC BAA-471 / A3(2) / M145).